A 384-amino-acid chain; its full sequence is MKHVFPTYNRFPVDIVKGNGTVVKDATGKTYLDFTSGIAVCNLGHCPENVTEAIQSQLANIWHTSNLYECALQDSVAELITDGTDKLVFFCNSGTEANEAALKLARKYTGKEKIITFEKSFHGRTFGSMSATGQAKIHQGFGRLVPGFTYVPYNDIESFKTELDENTAAVMLEVIQGEGGVIPGNAAWLMEVQMLCKKAGALLIIDEVQTGLGRTGTLFGFQQTFLDPDIFTLAKGLGNGLPIGAMVGKEHLSSAFGPGSHGSTFGGNKLALAAAKEILLTMKQTGFLEEVNAKAAYFRNLLEEHFEQLENVVAIRGEGFLIGIELGSSAAPVVTELRDKGLLILTAGPNILRILPPLTVSYAEIDQAISILKSVLEKQLIGSE.

Residues 94–95 (GT) and phenylalanine 121 contribute to the pyridoxal 5'-phosphate site. Arginine 124 contacts N(2)-acetyl-L-ornithine. 206–209 (DEVQ) lines the pyridoxal 5'-phosphate pocket. Lysine 235 carries the post-translational modification N6-(pyridoxal phosphate)lysine. Serine 263 serves as a coordination point for N(2)-acetyl-L-ornithine. Threonine 264 contacts pyridoxal 5'-phosphate.

The protein belongs to the class-III pyridoxal-phosphate-dependent aminotransferase family. ArgD subfamily. Homodimer. It depends on pyridoxal 5'-phosphate as a cofactor.

It is found in the cytoplasm. It carries out the reaction N(2)-acetyl-L-ornithine + 2-oxoglutarate = N-acetyl-L-glutamate 5-semialdehyde + L-glutamate. It participates in amino-acid biosynthesis; L-arginine biosynthesis; N(2)-acetyl-L-ornithine from L-glutamate: step 4/4. This is Acetylornithine aminotransferase from Listeria innocua serovar 6a (strain ATCC BAA-680 / CLIP 11262).